Here is a 246-residue protein sequence, read N- to C-terminus: Ribosomal RNA large subunit methyltransferase E (246 aa).

Positions 81, 83, 104, 120, and 144 each coordinate S-adenosyl-L-methionine. Catalysis depends on lysine 184, which acts as the Proton acceptor.

This sequence belongs to the class I-like SAM-binding methyltransferase superfamily. RNA methyltransferase RlmE family.

Its subcellular location is the cytoplasm. The catalysed reaction is uridine(2552) in 23S rRNA + S-adenosyl-L-methionine = 2'-O-methyluridine(2552) in 23S rRNA + S-adenosyl-L-homocysteine + H(+). Its function is as follows. Specifically methylates the uridine in position 2552 of 23S rRNA at the 2'-O position of the ribose in the fully assembled 50S ribosomal subunit. In Agrobacterium fabrum (strain C58 / ATCC 33970) (Agrobacterium tumefaciens (strain C58)), this protein is Ribosomal RNA large subunit methyltransferase E.